The primary structure comprises 385 residues: Mannitol-1-phosphate 5-dehydrogenase (385 aa).

4-15 (AVHFGAGNIGRG) serves as a coordination point for NAD(+).

Belongs to the mannitol dehydrogenase family.

It catalyses the reaction D-mannitol 1-phosphate + NAD(+) = beta-D-fructose 6-phosphate + NADH + H(+). The sequence is that of Mannitol-1-phosphate 5-dehydrogenase from Lactococcus lactis subsp. lactis (strain IL1403) (Streptococcus lactis).